The chain runs to 424 residues: MHRKHLQEIPDLSSNVATSFTWGWDSSKTSELLSGMGVSALEKEEPDSENIPQELLSNLGHPESPPRKRLKSKGSDKDFVIVRRPKLNRENFPGVSWDSLPDELLLGIFSCLCLPELLKVSGVCKRWYRLASDESLWQTLDLTGKNLHPDVTGRLLSQGVIAFRCPRSFMDQPLAEHFSPFRVQHMDLSNSVIEVSTLHGILSQCSKLQNLSLEGLRLSDPIVNTLAKNSNLVRLNLSGCSGFSEFALQTLLSSCSRLDELNLSWCFDFTEKHVQVAVAHVSETITQLNLSGYRKNLQKSDLSTLVRRCPNLVHLDLSDSVMLKNDCFQEFFQLNYLQHLSLSRCYDIIPETLLELGEIPTLKTLQVFGIVPDGTLQLLKEALPHLQINCSHFTTIARPTIGNKKNQEIWGIKCRLTLQKPSCL.

A mediates interaction with hepatitis C virus non-structural protein NS5A region spans residues 1–220 (MHRKHLQEIP…LSLEGLRLSD (220 aa)). Residues 39–73 (SALEKEEPDSENIPQELLSNLGHPESPPRKRLKSK) are disordered. Ser64 bears the Phosphoserine mark. The short motif at 67–73 (RKRLKSK) is the Nuclear localization signal element. N6-acetyllysine; by p300/EP300 occurs at positions 68 and 71. Ser72 and Ser75 each carry phosphoserine. One can recognise an F-box domain in the interval 94-140 (GVSWDSLPDELLLGIFSCLCLPELLKVSGVCKRWYRLASDESLWQTL). 10 LRR repeats span residues 151-176 (VTGR…PLAE), 177-204 (HFSP…ILSQ), 210-234 (NLSL…NLVR), 235-257 (LNLS…SCSR), 258-284 (LDEL…VSET), 286-308 (TQLN…LVRR), 309-330 (CPNL…CFQE), 334-356 (LNYL…LLEL), 359-378 (IPTL…TLQL), and 380-401 (KEAL…RPTI). Ser179 is modified (phosphoserine). The segment at 402-424 (GNKKNQEIWGIKCRLTLQKPSCL) is mediates interaction with IFI27.

In terms of assembly, part of a SCF(SKP2) complex consisting of CUL1, RBX1, SKP1 and SKP2. Component of a SCF(SKP2)-like complex containing CUL1, SKP1, TRIM21 and SKP2. Interacts directly with CUL1 and SKP1. Interacts with CKS1. Interacts with ASB2 which is the substrate-recognition component of a probable ECS E3 ubiquitin-protein ligase complex; ASB2 is likely to bridge the formation of dimeric E3-ubiquitin-protein ligase complexes composed of an ECS complex and an SCF(SKP2) complex. Interacts with the cyclin-A-CDK2 complex. Interacts with ORC1, phosphorylated CDT1, phosphorylated RBL2, ELF4, phosphorylated RAG2, FOXO1, UBP43, MYC, TOB1, TAL1 and KMT2A/MLL1. Interacts with TRIM21. Interacts with cyclin-E. Interacts with IFI27; promotes the ubiquitin-mediated proteasomal degradation of hepatitis C virus/HCV non-structural protein NS5A. Interacts with CARM1. (Microbial infection) Interacts with hepatitis C virus/HCV non-structural protein NS5A; promotes the ubiquitin-mediated proteasomal degradation of NS5A. In terms of processing, phosphorylated on serine and threonine resudues in response to DNA damage, promoting 'Lys-63'-linked ubiquitination of NBN. Ubiquitinated by the APC/C complex, leading to its degradation by the proteasome. Deubiquitinated by USP13. Post-translationally, acetylation at Lys-68 and Lys-71 increases stability through impairment of APC/C-mediated proteolysis and promotes cytoplasmic retention. Deacetylated by SIRT3.

It is found in the cytoplasm. It localises to the nucleus. It participates in protein modification; protein ubiquitination. Functionally, substrate recognition component of a SCF (SKP1-CUL1-F-box protein) E3 ubiquitin-protein ligase complex which mediates the ubiquitination and subsequent proteasomal degradation of target proteins involved in cell cycle progression, signal transduction and transcription. Specifically recognizes phosphorylated CDKN1B/p27kip and is involved in regulation of G1/S transition. Degradation of CDKN1B/p27kip also requires CKS1. Recognizes target proteins ORC1, CDT1, RBL2, KMT2A/MLL1, CDK9, RAG2, NBN, FOXO1, UBP43, YTHDF2, and probably MYC, TOB1 and TAL1. Degradation of TAL1 also requires STUB1. Recognizes CDKN1A in association with CCNE1 or CCNE2 and CDK2. Promotes ubiquitination and destruction of CDH1 in a CK1-dependent manner, thereby regulating cell migration. Following phosphorylation in response to DNA damage, mediates 'Lys-63'-linked ubiquitination of NBN, promoting ATM recruitment to DNA damage sites and DNA repair via homologous recombination. Through the ubiquitin-mediated proteasomal degradation of hepatitis C virus non-structural protein 5A, has an antiviral activity towards that virus. This Homo sapiens (Human) protein is S-phase kinase-associated protein 2 (SKP2).